The following is a 420-amino-acid chain: D-tagatose-1,6-bisphosphate aldolase subunit GatZ (420 aa).

It belongs to the GatZ/KbaZ family. GatZ subfamily. In terms of assembly, forms a complex with GatY.

It participates in carbohydrate metabolism; D-tagatose 6-phosphate degradation; D-glyceraldehyde 3-phosphate and glycerone phosphate from D-tagatose 6-phosphate: step 2/2. Functionally, component of the tagatose-1,6-bisphosphate aldolase GatYZ that is required for full activity and stability of the Y subunit. Could have a chaperone-like function for the proper and stable folding of GatY. When expressed alone, GatZ does not show any aldolase activity. Is involved in the catabolism of galactitol. The chain is D-tagatose-1,6-bisphosphate aldolase subunit GatZ from Escherichia coli O6:H1 (strain CFT073 / ATCC 700928 / UPEC).